The sequence spans 177 residues: Putative rubredoxin (177 aa).

One can recognise a Rubredoxin-like domain in the interval 1-38 (MKICRICGYQIPEGEFNLLEDGWVCPRCGVGKEELQDS). Residues cysteine 4, cysteine 7, cysteine 25, and cysteine 28 each contribute to the Fe cation site.

Belongs to the rubredoxin family. Fe(3+) serves as cofactor.

The chain is Putative rubredoxin (rdxA) from Methanothermobacter thermautotrophicus (strain ATCC 29096 / DSM 1053 / JCM 10044 / NBRC 100330 / Delta H) (Methanobacterium thermoautotrophicum).